The sequence spans 98 residues: Small ribosomal subunit protein uS17 (98 aa).

This sequence belongs to the universal ribosomal protein uS17 family. Part of the 30S ribosomal subunit.

One of the primary rRNA binding proteins, it binds specifically to the 5'-end of 16S ribosomal RNA. In Mesomycoplasma hyopneumoniae (strain 232) (Mycoplasma hyopneumoniae), this protein is Small ribosomal subunit protein uS17.